The chain runs to 317 residues: Putative HTH-type transcriptional regulatory protein Mlab_0160 (317 aa).

In terms of domain architecture, HTH cro/C1-type spans 132–189 (LRTLREEQAMSLGDLAHALGVSRRTISKYEGGMGTTLEMAMRLEEFFNDDIVMPIDLL). The H-T-H motif DNA-binding region spans 143–162 (LGDLAHALGVSRRTISKYEG). The interval 199–219 (VPASLASGHNPESDAQPKRPE) is disordered. Residues 209-219 (PESDAQPKRPE) are compositionally biased toward basic and acidic residues.

The polypeptide is Putative HTH-type transcriptional regulatory protein Mlab_0160 (Methanocorpusculum labreanum (strain ATCC 43576 / DSM 4855 / Z)).